The sequence spans 2352 residues: Cell wall alpha-1,3-glucan synthase mok12 (2352 aa).

Residues 1786–1813 (SNDFGIREVPLSDANQSSQADSTSIDRY) are disordered. The segment covering 1798–1813 (DANQSSQADSTSIDRY) has biased composition (polar residues).

The protein belongs to the glycosyltransferase group 1 family.

It carries out the reaction [(1-&gt;3)-alpha-D-glucosyl](n) + UDP-alpha-D-glucose = [(1-&gt;3)-alpha-D-glucosyl](n+1) + UDP + H(+). The sequence is that of Cell wall alpha-1,3-glucan synthase mok12 (mok12) from Schizosaccharomyces pombe (strain 972 / ATCC 24843) (Fission yeast).